We begin with the raw amino-acid sequence, 88 residues long: Cell division topological specificity factor (88 aa).

The protein belongs to the MinE family.

Its function is as follows. Prevents the cell division inhibition by proteins MinC and MinD at internal division sites while permitting inhibition at polar sites. This ensures cell division at the proper site by restricting the formation of a division septum at the midpoint of the long axis of the cell. In Herminiimonas arsenicoxydans, this protein is Cell division topological specificity factor.